A 469-amino-acid polypeptide reads, in one-letter code: Glutamate--tRNA ligase 2 (469 aa).

The short motif at 11–21 (PSPTGHLHLGG) is the 'HIGH' region element. Residues 238–242 (KLSKR) carry the 'KMSKS' region motif. K241 provides a ligand contact to ATP.

It belongs to the class-I aminoacyl-tRNA synthetase family. Glutamate--tRNA ligase type 1 subfamily. In terms of assembly, monomer.

It localises to the cytoplasm. It catalyses the reaction tRNA(Glu) + L-glutamate + ATP = L-glutamyl-tRNA(Glu) + AMP + diphosphate. In terms of biological role, catalyzes the attachment of glutamate to tRNA(Glu) in a two-step reaction: glutamate is first activated by ATP to form Glu-AMP and then transferred to the acceptor end of tRNA(Glu). The sequence is that of Glutamate--tRNA ligase 2 from Ehrlichia chaffeensis (strain ATCC CRL-10679 / Arkansas).